A 251-amino-acid polypeptide reads, in one-letter code: Long-distance movement protein (251 aa).

The interval 25–134 is disordered; that stretch reads SGKSCNSGGA…VAQPQQRWAK (110 aa). Positions 108 to 122 match the Nuclear localization signal motif; sequence RPRRRAGRSGGMDPR. The Nuclear export signal motif lies at 149–153; it reads LPSLL.

Homooligomer. Interacts with host FIB2; this interaction, is required for ORF3 protein transiting through host Cajal body and nucleolus, relocalization of fibrillarin to the cytoplasm, and in presence of viral RNA, leads to the formation of stable RNPs.

It localises to the host cytoplasm. It is found in the host nucleus. The protein localises to the host nucleolus. Protects and provides long-distance movement to viral RNA. Self associates and binds viral RNA and fibrillarin to form filamentous ribonucleoproteins (RNPs) protected from RNase. ORF3 protein actually fulfills functions that are usually provided by capsid protein, which is absent from umbraviruses' genome. The polypeptide is Long-distance movement protein (ORF3) (Clitoria (Hyacinth bean)).